A 475-amino-acid chain; its full sequence is Ribulose bisphosphate carboxylase large chain (475 aa).

A propeptide spanning residues 1-2 (MA) is cleaved from the precursor. N-acetylproline is present on Pro-3. Lys-14 carries the post-translational modification N6,N6,N6-trimethyllysine. Substrate is bound by residues Asn-123 and Thr-173. Catalysis depends on Lys-175, which acts as the Proton acceptor. Residue Lys-177 coordinates substrate. Mg(2+) is bound by residues Lys-201, Asp-203, and Glu-204. Lys-201 carries the post-translational modification N6-carboxylysine. Catalysis depends on His-294, which acts as the Proton acceptor. Positions 295, 327, and 379 each coordinate substrate.

Belongs to the RuBisCO large chain family. Type I subfamily. As to quaternary structure, heterohexadecamer of 8 large chains and 8 small chains; disulfide-linked. The disulfide link is formed within the large subunit homodimers. Mg(2+) is required as a cofactor. The disulfide bond which can form in the large chain dimeric partners within the hexadecamer appears to be associated with oxidative stress and protein turnover.

It localises to the plastid. It is found in the chloroplast. It carries out the reaction 2 (2R)-3-phosphoglycerate + 2 H(+) = D-ribulose 1,5-bisphosphate + CO2 + H2O. The enzyme catalyses D-ribulose 1,5-bisphosphate + O2 = 2-phosphoglycolate + (2R)-3-phosphoglycerate + 2 H(+). Functionally, ruBisCO catalyzes two reactions: the carboxylation of D-ribulose 1,5-bisphosphate, the primary event in carbon dioxide fixation, as well as the oxidative fragmentation of the pentose substrate in the photorespiration process. Both reactions occur simultaneously and in competition at the same active site. The sequence is that of Ribulose bisphosphate carboxylase large chain from Oedogonium cardiacum (Filamentous green alga).